The sequence spans 554 residues: Glucose-6-phosphate isomerase (554 aa).

Glu359 acts as the Proton donor in catalysis. Catalysis depends on residues His390 and Lys518.

Belongs to the GPI family.

Its subcellular location is the cytoplasm. The catalysed reaction is alpha-D-glucose 6-phosphate = beta-D-fructose 6-phosphate. Its pathway is carbohydrate biosynthesis; gluconeogenesis. It participates in carbohydrate degradation; glycolysis; D-glyceraldehyde 3-phosphate and glycerone phosphate from D-glucose: step 2/4. Catalyzes the reversible isomerization of glucose-6-phosphate to fructose-6-phosphate. This Pseudomonas entomophila (strain L48) protein is Glucose-6-phosphate isomerase.